A 205-amino-acid polypeptide reads, in one-letter code: MALQPCVIVGLGNPGIEYATTRHNVGFRVLDTLAQRYRVQLTQQRRFLGEVAEVLIQGQKVRLLKPTTYMNSSGQSLHALLNFYKLPLERTLVVHDDADLPLGRLRLRLSGSTGGHNGIKSIIQHCHSQQFPRLKVGIAFGDRLQQQTGPRNAVPFVLGHFSATELAILPAVLDLAVDAIELSIQSGVEVAMNRYNGKSIPLPQA.

Y18 contacts tRNA. H23 (proton acceptor) is an active-site residue. Residues Y69, N71, and N117 each coordinate tRNA.

It belongs to the PTH family. As to quaternary structure, monomer.

The protein resides in the cytoplasm. It carries out the reaction an N-acyl-L-alpha-aminoacyl-tRNA + H2O = an N-acyl-L-amino acid + a tRNA + H(+). Functionally, hydrolyzes ribosome-free peptidyl-tRNAs (with 1 or more amino acids incorporated), which drop off the ribosome during protein synthesis, or as a result of ribosome stalling. In terms of biological role, catalyzes the release of premature peptidyl moieties from peptidyl-tRNA molecules trapped in stalled 50S ribosomal subunits, and thus maintains levels of free tRNAs and 50S ribosomes. The sequence is that of Peptidyl-tRNA hydrolase from Thermosynechococcus vestitus (strain NIES-2133 / IAM M-273 / BP-1).